We begin with the raw amino-acid sequence, 182 residues long: Translation initiation factor IF-3 (182 aa).

The interval Met-1–Ile-22 is disordered.

This sequence belongs to the IF-3 family. Monomer.

The protein localises to the cytoplasm. In terms of biological role, IF-3 binds to the 30S ribosomal subunit and shifts the equilibrium between 70S ribosomes and their 50S and 30S subunits in favor of the free subunits, thus enhancing the availability of 30S subunits on which protein synthesis initiation begins. This is Translation initiation factor IF-3 from Xanthomonas campestris pv. campestris (strain ATCC 33913 / DSM 3586 / NCPPB 528 / LMG 568 / P 25).